A 528-amino-acid polypeptide reads, in one-letter code: Glutamyl-tRNA(Gln) amidotransferase subunit A, mitochondrial (528 aa).

Lysine 76 functions as the Charge relay system in the catalytic mechanism. The disordered stretch occupies residues 148-167 (YREKRKQNPHSENEDSDWLI). The active-site Charge relay system is the serine 171. The Acyl-ester intermediate role is filled by serine 195.

This sequence belongs to the amidase family. GatA subfamily. Subunit of the heterotrimeric GatCAB amidotransferase (AdT) complex, composed of A (QRSL1), B (GATB) and C (GATC) subunits.

The protein resides in the mitochondrion. It carries out the reaction L-glutamyl-tRNA(Gln) + L-glutamine + ATP + H2O = L-glutaminyl-tRNA(Gln) + L-glutamate + ADP + phosphate + H(+). In terms of biological role, allows the formation of correctly charged Gln-tRNA(Gln) through the transamidation of misacylated Glu-tRNA(Gln) in the mitochondria. The reaction takes place in the presence of glutamine and ATP through an activated gamma-phospho-Glu-tRNA(Gln). The polypeptide is Glutamyl-tRNA(Gln) amidotransferase subunit A, mitochondrial (Homo sapiens (Human)).